Here is a 232-residue protein sequence, read N- to C-terminus: Octanoyltransferase (232 aa).

The region spanning 33-216 is the BPL/LPL catalytic domain; that stretch reads GRAQDTVILL…HLVRALSNGS (184 aa). Substrate is bound by residues 71–78, 146–148, and 159–161; these read RGGRITWH, AIG, and GFA. C177 acts as the Acyl-thioester intermediate in catalysis.

This sequence belongs to the LipB family.

The protein resides in the cytoplasm. It catalyses the reaction octanoyl-[ACP] + L-lysyl-[protein] = N(6)-octanoyl-L-lysyl-[protein] + holo-[ACP] + H(+). It functions in the pathway protein modification; protein lipoylation via endogenous pathway; protein N(6)-(lipoyl)lysine from octanoyl-[acyl-carrier-protein]: step 1/2. Catalyzes the transfer of endogenously produced octanoic acid from octanoyl-acyl-carrier-protein onto the lipoyl domains of lipoate-dependent enzymes. Lipoyl-ACP can also act as a substrate although octanoyl-ACP is likely to be the physiological substrate. This is Octanoyltransferase from Clavibacter sepedonicus (Clavibacter michiganensis subsp. sepedonicus).